We begin with the raw amino-acid sequence, 445 residues long: Adenine permease AdeP (445 aa).

Residues 1–28 (MSHQHTTQTSGQGMLERVFKLREHGTTA) are Cytoplasmic-facing. The chain crosses the membrane as a helical span at residues 29–52 (RTEVIAGFTTFLTMVYIVFVNPQI). At 53 to 62 (LGVAGMDTSA) the chain is on the periplasmic side. The chain crosses the membrane as a helical span at residues 63 to 81 (VFVTTCLIAAFGSIMMGLF). Over 82-83 (AN) the chain is Cytoplasmic. The chain crosses the membrane as a discontinuously helical span at residues 84 to 100 (LPVALAPAMGLNAFFAF). The Periplasmic portion of the chain corresponds to 101–112 (VVVQAMGLPWQV). The chain crosses the membrane as a helical span at residues 113-132 (GMGAIFWGAIGLLLLTIFRV). The Cytoplasmic segment spans residues 133 to 144 (RYWMIANIPVSL). The helical transmembrane segment at 145–165 (RVGITSGIGLFIGMMGLKNAG) threads the bilayer. Residues 166 to 181 (VIVANPETLVSIGNLT) are Periplasmic-facing. The helical transmembrane segment at 182–199 (SHSVLLGILGFFIIAILA) threads the bilayer. Topologically, residues 200–203 (SRNI) are cytoplasmic. The helical transmembrane segment at 204-222 (HAAVLVSIVVTTLLGWMLG) threads the bilayer. Over 223-250 (DVHYNGIVSAPPSVMTVVGHVDLAGSFN) the chain is Periplasmic. A helical transmembrane segment spans residues 251–279 (LGLAGVIFSFMLVNLFDSSGTLIGVTDKA). The Cytoplasmic segment spans residues 280 to 292 (GLADEKGKFPRMK). The chain crosses the membrane as a helical span at residues 293-308 (QALYVDSISSVTGSFI). At 309–310 (GT) the chain is on the periplasmic side. A discontinuously helical membrane pass occupies residues 311–326 (SSVTAYIESSSGVSVG). Topologically, residues 327-330 (GRTG) are cytoplasmic. The helical transmembrane segment at 331–345 (LTAVVVGLLFLLVIF) threads the bilayer. At 346-356 (LSPLAGMVPGY) the chain is on the periplasmic side. A helical membrane pass occupies residues 357-376 (AAAGALIYVGVLMTSSLARV). Residues 377 to 381 (NWQDL) lie on the Cytoplasmic side of the membrane. The segment at residues 382 to 417 (TESVPAFITAVMMPFSFSITEGIALGFISYCVMKIG) is an intramembrane region (discontinuously helical). The Cytoplasmic portion of the chain corresponds to 418–445 (TGRLRDLSPCVIIVALLFILKIVFIDAH).

This sequence belongs to the nucleobase:cation symporter-2 (NCS2) (TC 2.A.40) family. Azg-like subfamily.

The protein resides in the cell inner membrane. Its activity is regulated as follows. Internal adenine may inhibit transport. Its function is as follows. High-affinity transporter for adenine. In Escherichia coli (strain K12), this protein is Adenine permease AdeP (adeP).